A 558-amino-acid chain; its full sequence is Vanin-like protein 1 (558 aa).

The N-terminal stretch at Met1–Ser22 is a signal peptide. Residues Tyr33–Lys299 form the CN hydrolase domain. Asn65 is a glycosylation site (N-linked (GlcNAc...) asparagine). Residue Glu76 is the Proton acceptor of the active site. Residues Asn103, Asn120, and Asn128 are each glycosylated (N-linked (GlcNAc...) asparagine). Lys171 serves as the catalytic Proton donor. N-linked (GlcNAc...) asparagine glycosylation is present at Asn180. Cys203 functions as the Nucleophile in the catalytic mechanism. Asn354 and Asn379 each carry an N-linked (GlcNAc...) asparagine glycan. The GPI-anchor amidated serine moiety is linked to residue Ser531. The propeptide at Gly532–Ser558 is removed in mature form.

The protein belongs to the carbon-nitrogen hydrolase superfamily. BTD/VNN family. In terms of tissue distribution, expressed in larvae and early pupae. Expressed in third instar larvae.

The protein resides in the cell membrane. This chain is Vanin-like protein 1, found in Drosophila melanogaster (Fruit fly).